Consider the following 718-residue polypeptide: Sodium/myo-inositol cotransporter (718 aa).

At 1 to 9 the chain is on the extracellular side; sequence MRAVLEAAD. Residues 10-29 traverse the membrane as a helical segment; the sequence is IAVVALYFILVMCIGFFAMW. Residues 30–38 lie on the Cytoplasmic side of the membrane; that stretch reads KSNRSTVSG. The chain crosses the membrane as a helical span at residues 39-57; it reads YFLAGRSMTWVAIGASLFV. Over 58-86 the chain is Extracellular; that stretch reads SNIGSEHFIGLAGSGAASGFAVGAWEFNA. The helical transmembrane segment at 87-110 threads the bilayer; it reads LLLLQLLGWVFIPIYIRSGVYTMP. At 111-123 the chain is on the cytoplasmic side; the sequence is EYLSKRFGGHRIQ. A helical transmembrane segment spans residues 124–144; that stretch reads VYFAALSLLLYIFTKLSVDLY. The Extracellular segment spans residues 145-157; sequence SGALFIQESLGWN. Residues 158 to 183 traverse the membrane as a helical segment; it reads LYVSVILLIGMTALLTVTGGLVAVIY. Over 184–186 the chain is Cytoplasmic; that stretch reads TDT. The chain crosses the membrane as a helical span at residues 187–205; it reads LQALLMIIGALTLMVISMV. Residues 206–303 are Extracellular-facing; sequence KIGGFEEVKR…HAKGSTLMAG (98 aa). An N-linked (GlcNAc...) asparagine glycan is attached at Asn232. Residues 304–324 traverse the membrane as a helical segment; the sequence is FLKLLPMFIIVVPGMISRIVF. Topologically, residues 325 to 353 are cytoplasmic; sequence ADEIACINPEHCMQVCGSRAGCSNIAYPR. The chain crosses the membrane as a helical span at residues 354-376; that stretch reads LVMTLVPVGLRGLMMAVMIAALM. Over 377–406 the chain is Extracellular; the sequence is SDLDSIFNSASTIFTLDVYKLIRKSASSRE. Residues 407 to 430 traverse the membrane as a helical segment; the sequence is LMIVGRIFVAFMVVISIAWVPIIV. At 431–443 the chain is on the cytoplasmic side; it reads EMQGGQMYLYIQE. A helical membrane pass occupies residues 444–462; it reads VADYLTPPVAALFLLAIFW. Residues 463 to 510 lie on the Extracellular side of the membrane; it reads KRCNEQGAFYGGMAGFVLGAVRLILAFTYRAPECDQPDNRPGFIKDIH. A helical membrane pass occupies residues 511–532; it reads YMYVATALFWITGLITVIVSLL. Residues 533–695 lie on the Cytoplasmic side of the membrane; the sequence is TPPPTKDQIR…QMLEETPQVK (163 aa). 2 positions are modified to phosphoserine: Ser594 and Ser632. A helical transmembrane segment spans residues 696–716; sequence VILNIGLFAVCSLGIFMFVYF. Residues 717-718 lie on the Extracellular side of the membrane; it reads SL.

It belongs to the sodium:solute symporter (SSF) (TC 2.A.21) family. As to quaternary structure, interacts with KCNQ2 (via the pore module). Interacts with KCNQ1; this interaction is direct. Forms coregulatory complexes with ion channels KCNQ2-KCNQ3 and KCNQ1-KCNE2. In terms of tissue distribution, highly expressed in kidney, placenta, and brain and at a lesser extent in thymus, lung, bladder, and testes. Expressed in the choroid plexus epithelium (at protein level).

It is found in the apical cell membrane. Its subcellular location is the basolateral cell membrane. It carries out the reaction myo-inositol(out) + 2 Na(+)(out) = myo-inositol(in) + 2 Na(+)(in). The catalysed reaction is scyllo-inositol(out) + 2 Na(+)(out) = scyllo-inositol(in) + 2 Na(+)(in). Functionally, electrogenic Na(+)-coupled sugar symporter that actively transports myo-inositol and its stereoisomer scyllo-inositol across the plasma membrane, with a Na(+) to sugar coupling ratio of 2:1. Maintains myo-inositol concentration gradient that defines cell volume and fluid balance during osmotic stress, in particular in the fetoplacental unit and central nervous system. Forms coregulatory complexes with voltage-gated K(+) ion channels, allosterically altering ion selectivity, voltage dependence and gating kinetics of the channel. In turn, K(+) efflux through the channel forms a local electrical gradient that modulates electrogenic Na(+)-coupled myo-inositol influx through the transporter. Associates with KCNQ1-KCNE2 channel in the apical membrane of choroid plexus epithelium and regulates the myo-inositol gradient between blood and cerebrospinal fluid with an impact on neuron excitability. Associates with KCNQ2-KCNQ3 channel altering ion selectivity, increasing Na(+) and Cs(+) permeation relative to K(+) permeation. Provides myo-inositol precursor for biosynthesis of phosphoinositides such as PI(4,5)P2, thus indirectly affecting the activity of phosphoinositide-dependent ion channels and Ca(2+) signaling upon osmotic stress. (Microbial infection) Functions as a retroviral receptor for M813 murine leukemia virus (MuLV) entry. This is Sodium/myo-inositol cotransporter (Slc5a3) from Mus musculus (Mouse).